Reading from the N-terminus, the 314-residue chain is Dual specificity protein phosphatase 2 (314 aa).

In terms of domain architecture, Rhodanese spans 23–144 (EAERTLLLDC…FQGCCPDLCS (122 aa)). The 142-residue stretch at 172 to 313 (GPVEILPYLF…LLQFETQVLC (142 aa)) folds into the Tyrosine-protein phosphatase domain. Cys257 functions as the Phosphocysteine intermediate in the catalytic mechanism.

Belongs to the protein-tyrosine phosphatase family. Non-receptor class dual specificity subfamily. Interacts with MAPK14; this interaction does not lead to catalytic activation of DUSP2 and dephosphrylation of MAPK14. Expressed in hematopoietic tissues.

It localises to the nucleus. The enzyme catalyses O-phospho-L-tyrosyl-[protein] + H2O = L-tyrosyl-[protein] + phosphate. It carries out the reaction O-phospho-L-threonyl-[protein] + H2O = L-threonyl-[protein] + phosphate. In terms of biological role, dephosphorylates both phosphorylated Thr and Tyr residues in MAPK1, and dephosphorylation of phosphotyrosine is slightly faster than that of phosphothreonine. Can dephosphorylate MAPK1. The polypeptide is Dual specificity protein phosphatase 2 (Homo sapiens (Human)).